The following is a 380-amino-acid chain: Succinyl-diaminopimelate desuccinylase (380 aa).

A Zn(2+)-binding site is contributed by His69. Asp71 is a catalytic residue. Residue Asp102 coordinates Zn(2+). Glu135 (proton acceptor) is an active-site residue. 3 residues coordinate Zn(2+): Glu136, Glu164, and His353.

It belongs to the peptidase M20A family. DapE subfamily. As to quaternary structure, homodimer. Requires Zn(2+) as cofactor. Co(2+) serves as cofactor.

The catalysed reaction is N-succinyl-(2S,6S)-2,6-diaminopimelate + H2O = (2S,6S)-2,6-diaminopimelate + succinate. It functions in the pathway amino-acid biosynthesis; L-lysine biosynthesis via DAP pathway; LL-2,6-diaminopimelate from (S)-tetrahydrodipicolinate (succinylase route): step 3/3. In terms of biological role, catalyzes the hydrolysis of N-succinyl-L,L-diaminopimelic acid (SDAP), forming succinate and LL-2,6-diaminopimelate (DAP), an intermediate involved in the bacterial biosynthesis of lysine and meso-diaminopimelic acid, an essential component of bacterial cell walls. The chain is Succinyl-diaminopimelate desuccinylase from Cereibacter sphaeroides (strain ATCC 17023 / DSM 158 / JCM 6121 / CCUG 31486 / LMG 2827 / NBRC 12203 / NCIMB 8253 / ATH 2.4.1.) (Rhodobacter sphaeroides).